The following is a 563-amino-acid chain: NAD-dependent malic enzyme (563 aa).

Y101 functions as the Proton donor in the catalytic mechanism. R154 serves as a coordination point for NAD(+). Catalysis depends on K172, which acts as the Proton acceptor. Positions 243, 244, and 267 each coordinate a divalent metal cation. Positions 267 and 416 each coordinate NAD(+).

It belongs to the malic enzymes family. As to quaternary structure, homotetramer. Mg(2+) is required as a cofactor. Requires Mn(2+) as cofactor.

The enzyme catalyses (S)-malate + NAD(+) = pyruvate + CO2 + NADH. The catalysed reaction is oxaloacetate + H(+) = pyruvate + CO2. In Pseudomonas savastanoi pv. phaseolicola (strain 1448A / Race 6) (Pseudomonas syringae pv. phaseolicola (strain 1448A / Race 6)), this protein is NAD-dependent malic enzyme.